A 340-amino-acid chain; its full sequence is Aldose 1-epimerase (340 aa).

Arg77 serves as a coordination point for substrate. His172 functions as the Proton donor in the catalytic mechanism. Residue Asp243 coordinates substrate. Catalysis depends on Glu305, which acts as the Proton acceptor.

This sequence belongs to the aldose epimerase family.

The protein localises to the cytoplasm. It carries out the reaction alpha-D-glucose = beta-D-glucose. The protein operates within carbohydrate metabolism; hexose metabolism. Mutarotase converts alpha-aldose to the beta-anomer. It is active on D-glucose, L-arabinose, D-xylose, D-galactose, maltose and lactose. The protein is Aldose 1-epimerase (galM) of Haemophilus influenzae (strain ATCC 51907 / DSM 11121 / KW20 / Rd).